A 31-amino-acid polypeptide reads, in one-letter code: Mycofactocin precursor peptide (31 aa).

Belongs to the mycofactocin precursor peptide family. The post-translational modifications that lead to mycofactocin involve oxidative decarboxylation of the C-terminal tyrosine residue catalyzed by MftC, introduction of a tyramine-valine cross-link, removal of the modified C-terminal dipeptide by MftE. The released dipeptide then undergoes oxidative deamination by MftD, glycosylation by MftF and methylation by an unknown enzyme.

Functionally, precursor peptide that leads to mycofactocin (MFT) after extensive post-translational modifications by enzymes encoded by adjacent genes. Mycofactocin acts as a redox cofactor of nicotinamide-dependent oxidoreductases encoded in the same locus. Is required for the in vivo ethanol assimilation in M.smegmatis. In Mycolicibacterium smegmatis (strain ATCC 700084 / mc(2)155) (Mycobacterium smegmatis), this protein is Mycofactocin precursor peptide.